A 237-amino-acid polypeptide reads, in one-letter code: Large ribosomal subunit protein uL2 (237 aa).

Residues 1–11 are compositionally biased toward polar residues; sequence MGKRLISQNRG. 2 disordered regions span residues 1–26 and 204–237; these read MGKR…KRKG and PYGG…SRRT. Basic residues-rich tracts occupy residues 13–26 and 228–237; these read GTPK…KRKG and KVGHIASRRT.

It belongs to the universal ribosomal protein uL2 family. Part of the 50S ribosomal subunit. Forms a bridge to the 30S subunit in the 70S ribosome.

Functionally, one of the primary rRNA binding proteins. Required for association of the 30S and 50S subunits to form the 70S ribosome, for tRNA binding and peptide bond formation. It has been suggested to have peptidyltransferase activity; this is somewhat controversial. Makes several contacts with the 16S rRNA in the 70S ribosome. The polypeptide is Large ribosomal subunit protein uL2 (Methanococcus vannielii).